Reading from the N-terminus, the 146-residue chain is Hemoglobin subunit beta (146 aa).

Val-1 carries the post-translational modification N-acetylvaline. Residues 2-146 enclose the Globin domain; it reads HLSGGEKSAV…VAHALGHKYH (145 aa). The residue at position 12 (Thr-12) is a Phosphothreonine. Lys-59 is subject to N6-acetyllysine. His-63 is a binding site for heme b. An N6-acetyllysine modification is found at Lys-82. His-92 is a heme b binding site. Cys-93 is modified (S-nitrosocysteine). An N6-acetyllysine modification is found at Lys-144.

Belongs to the globin family. In terms of assembly, heterotetramer of two alpha chains and two beta chains. In terms of tissue distribution, red blood cells.

Involved in oxygen transport from the lung to the various peripheral tissues. This is Hemoglobin subunit beta (HBB) from Ornithorhynchus anatinus (Duckbill platypus).